The chain runs to 801 residues: Phenylalanine--tRNA ligase beta subunit (801 aa).

The tRNA-binding domain occupies 39–148 (AGSFTGVKVG…EDAVIGTDFR (110 aa)). Residues 401 to 476 (PKPNKVALRR…RIYGYDNIPN (76 aa)) form the B5 domain. Asp-454, Asp-460, Glu-463, and Glu-464 together coordinate Mg(2+). Residues 707–800 (SKFPSNRRDI…VSEKFGAALR (94 aa)) form the FDX-ACB domain.

This sequence belongs to the phenylalanyl-tRNA synthetase beta subunit family. Type 1 subfamily. As to quaternary structure, tetramer of two alpha and two beta subunits. Mg(2+) is required as a cofactor.

The protein localises to the cytoplasm. It catalyses the reaction tRNA(Phe) + L-phenylalanine + ATP = L-phenylalanyl-tRNA(Phe) + AMP + diphosphate + H(+). The protein is Phenylalanine--tRNA ligase beta subunit of Vibrio parahaemolyticus serotype O3:K6 (strain RIMD 2210633).